Consider the following 147-residue polypeptide: Hemoglobin subunit beta (147 aa).

The 146-residue stretch at 2-147 (EWTDAERSAI…VVSALCRQYH (146 aa)) folds into the Globin domain. Heme b contacts are provided by histidine 63 and histidine 92.

This sequence belongs to the globin family. In terms of assembly, heterotetramer of two alpha chains and two beta chains. Red blood cells.

Involved in oxygen transport from gills to the various peripheral tissues. The chain is Hemoglobin subunit beta (hbb) from Carassius auratus (Goldfish).